Reading from the N-terminus, the 773-residue chain is Angiomotin-like protein 2 (773 aa).

3 disordered regions span residues 41–157 (GGAG…HVRS), 169–238 (RNGA…SPHF), and 259–309 (QYQY…LAQM). Composition is skewed to basic and acidic residues over residues 80–91 (QGGETHLAENRL), 100–112 (KGEE…EAKA), and 141–152 (RRQDEALRELRH). The interval 101 to 302 (GEELPTYEEA…GPPGAQATSG (202 aa)) is required for interaction with CDH5. Phosphotyrosine; by FGFR1 is present on tyrosine 107. Residues 177–190 (HMSSSHSFPQLARS) are compositionally biased toward polar residues. Residues 196-213 (PRGPPAEGPEPRGPPPQY) show a composition bias toward pro residues. Residues 220 to 302 (QETAAVNDPR…GPPGAQATSG (83 aa)) are required for interaction with CDH1. Residues 304 to 577 (AHLAQMESVL…KYLEERAMRQ (274 aa)) are a coiled coil. Residues lysine 342 and lysine 403 each participate in a glycyl lysine isopeptide (Lys-Gly) (interchain with G-Cter in ubiquitin) cross-link. 2 disordered regions span residues 589–611 (QRDT…NEGL) and 677–754 (WQGF…TTSL). A compositionally biased stretch (pro residues) spans 701 to 710 (EEPPATPPLP). Residues 719-734 (DGSTQTDGPADSTSAC) are compositionally biased toward polar residues. Phosphoserine occurs at positions 753 and 756. Residues 770 to 773 (EILI) carry the PDZ-binding motif.

This sequence belongs to the angiomotin family. In terms of assembly, part of a complex composed of AMOTL2, MAGI1 and CDH5, within the complex AMOTL2 acts as a scaffold protein for the interaction of MAGI1 with CDH5. The complex is required for coupling actin fibers to cell junctions in endothelial cells. Within the complex AMOTL2 (via its N-terminus) interacts with CDH5. Interacts (via N-terminus) with MAGI1. Interacts (via N-terminus) with ACTB; the interaction facilitates binding of cell junction complexes to actin fibers in endothelial cells. Interacts with CDH1; the interaction may facilitate binding of radial actin fibers to cell junction complexes. Interacts with SRC. Interacts with YAP1; the interaction is required for ubiquitination of AMOTL2 and localization of YAP1 to tight junctions. Interacts with WWP1; the interaction facilitates WWP1 interaction with the Crumbs complex and subsequent WWP1 translocation to the plasma membrane. WWP1 interaction with the Crumbs complex promotes WWP1 monoubiquitination of AMOTL2 which subsequently activates the Hippo signaling pathway. When ubiquitinated interacts with LATS2 (via UBA domain); the interaction promotes LATS2 phosphorylation of YAP1. Interacts (via PPXY motif) with WWTR1/TAZ (via WW domain); the interaction promotes WWTR1/TAZ localization to the cytoplasm and thereby inhibition of its transcriptional properties. Interacts with PHLDB2; interaction may facilitate PHLDB2 localization to the myotube podosome cortex that surrounds the core. Monoubiquitinated at Lys-342 and Lys-403 by Crumbs complex-bound WWP1. De-ubiquitinated at Lys-342 and Lys-403 by USP9X; the interaction may be promoted by cell contact inhibition. Deubiquitination of AMOTL2 negatively regulates Hippo signaling activation. Post-translationally, phosphorylation at Tyr-107 is necessary for efficient binding to SRC and synergistically functioning with SRC to activate the downstream MAPK pathway.

The protein resides in the recycling endosome. Its subcellular location is the cytoplasm. The protein localises to the cell projection. It is found in the podosome. It localises to the cell junction. Its function is as follows. Regulates the translocation of phosphorylated SRC to peripheral cell-matrix adhesion sites. Required for proper architecture of actin filaments. Plays a role in coupling actin fibers to cell junctions in endothelial cells and is therefore required for correct endothelial cell morphology via facilitating transcellular transmission of mechanical force resulting in endothelial cell elongation. Required for the anchoring of radial actin fibers to CDH1 junction complexes at the cell membrane which facilitates organization of radial actin fiber structure and cellular response to contractile forces. This contributes to maintenance of cell area, size, shape, epithelial sheet organization and trophectoderm cell properties that facilitate blastocyst zona hatching. Inhibits the Wnt/beta-catenin signaling pathway, probably by recruiting CTNNB1 to recycling endosomes and hence preventing its translocation to the nucleus. Participates in angiogenesis. Activates the Hippo signaling pathway in response to cell contact inhibition via interaction with and ubiquitination by Crumbs complex-bound WWP1. Ubiquitinated AMOTL2 then interacts with LATS2 which in turn phosphorylates YAP1, excluding it from the nucleus and localizing it to the cytoplasm and tight junctions, therefore ultimately repressing YAP1-driven transcription of target genes. Acts to inhibit WWTR1/TAZ transcriptional coactivator activity via sequestering WWTR1/TAZ in the cytoplasm and at tight junctions. Regulates the size and protein composition of the podosome cortex and core at myofibril neuromuscular junctions. Selectively promotes FGF-induced MAPK activation through SRC. May play a role in the polarity, proliferation and migration of endothelial cells. In Rattus norvegicus (Rat), this protein is Angiomotin-like protein 2.